The chain runs to 258 residues: Ribosomal RNA small subunit methyltransferase J (258 aa).

Residues 123-124 and Asp177 each bind S-adenosyl-L-methionine; that span reads ER. The segment at 232-258 is disordered; it reads IDGPKPSHSLEGKSSRYDIYPKKALKA. Over residues 239–252 the composition is skewed to basic and acidic residues; that stretch reads HSLEGKSSRYDIYP.

The protein belongs to the methyltransferase superfamily. RsmJ family.

Its subcellular location is the cytoplasm. The catalysed reaction is guanosine(1516) in 16S rRNA + S-adenosyl-L-methionine = N(2)-methylguanosine(1516) in 16S rRNA + S-adenosyl-L-homocysteine + H(+). Functionally, specifically methylates the guanosine in position 1516 of 16S rRNA. The sequence is that of Ribosomal RNA small subunit methyltransferase J from Pseudomonas putida (strain ATCC 47054 / DSM 6125 / CFBP 8728 / NCIMB 11950 / KT2440).